The primary structure comprises 359 residues: MTTTLQQRSGASSWQAFCEWVTSTNNRLYVGWFGVLMIPTLLAATICFVIAFVAAPPVDIDGIREPVAGSLIYGNNIISGAVVPSSNAIGLHFYPIWEAASLDEWLYNGGPFQLVVFHFLIGIYAYMGREWELSYRLGMRPWICVAYSAPVAAASAVFLVYPFGQGSFSDAMPLGISGTFNYMLVFQAEHNILMHPFHMLGVAGVFGGSLFSAMHGSLVTSSLVRETTETESQNYGYKFGQEEETYNIVAAHGYFGRLIFQYASFNNSRSLHFFLAAWPVVGIWFTALGVSTMAFNLNGFNFNQSILDGQGRVLNTWADVLNRAGLGMEVMHERNAHNFPLDLAAAESTPVALQAPAIG.

Transmembrane regions (helical) follow at residues 29 to 46 (YVGWFGVLMIPTLLAATI), 118 to 133 (HFLIGIYAYMGREWEL), and 142 to 156 (WICVAYSAPVAAASA). His118 serves as a coordination point for chlorophyll a. Residue Tyr126 participates in pheophytin a binding. 2 residues coordinate [CaMn4O5] cluster: Asp170 and Glu189. The chain crosses the membrane as a helical span at residues 197-218 (FHMLGVAGVFGGSLFSAMHGSL). His198 is a chlorophyll a binding site. A quinone-binding positions include His215 and 264–265 (SF). Residue His215 participates in Fe cation binding. Fe cation is bound at residue His272. A helical membrane pass occupies residues 274 to 288 (FLAAWPVVGIWFTAL). 4 residues coordinate [CaMn4O5] cluster: His332, Glu333, Asp342, and Ala344. Residues 345-359 (AAESTPVALQAPAIG) constitute a propeptide that is removed on maturation.

Belongs to the reaction center PufL/M/PsbA/D family. In terms of assembly, PSII is composed of 1 copy each of membrane proteins PsbA, PsbB, PsbC, PsbD, PsbE, PsbF, PsbH, PsbI, PsbJ, PsbK, PsbL, PsbM, PsbT, PsbX, PsbY, PsbZ, Psb30/Ycf12, peripheral proteins PsbO, CyanoQ (PsbQ), PsbU, PsbV and a large number of cofactors. It forms dimeric complexes. The cofactor is The D1/D2 heterodimer binds P680, chlorophylls that are the primary electron donor of PSII, and subsequent electron acceptors. It shares a non-heme iron and each subunit binds pheophytin, quinone, additional chlorophylls, carotenoids and lipids. D1 provides most of the ligands for the Mn4-Ca-O5 cluster of the oxygen-evolving complex (OEC). There is also a Cl(-1) ion associated with D1 and D2, which is required for oxygen evolution. The PSII complex binds additional chlorophylls, carotenoids and specific lipids.. Tyr-161 forms a radical intermediate that is referred to as redox-active TyrZ, YZ or Y-Z. Post-translationally, C-terminally processed by CtpA; processing is essential to allow assembly of the oxygen-evolving complex and thus photosynthetic growth.

It localises to the cellular thylakoid membrane. The catalysed reaction is 2 a plastoquinone + 4 hnu + 2 H2O = 2 a plastoquinol + O2. Photosystem II (PSII) is a light-driven water:plastoquinone oxidoreductase that uses light energy to abstract electrons from H(2)O, generating O(2) and a proton gradient subsequently used for ATP formation. It consists of a core antenna complex that captures photons, and an electron transfer chain that converts photonic excitation into a charge separation. The D1/D2 (PsbA/PsbD) reaction center heterodimer binds P680, the primary electron donor of PSII as well as several subsequent electron acceptors. The sequence is that of Photosystem II protein D1 1 from Parasynechococcus marenigrum (strain WH8102).